Here is a 398-residue protein sequence, read N- to C-terminus: tRNA pseudouridine synthase D (398 aa).

The Nucleophile role is filled by D76. Residues 151–361 enclose the TRUD domain; that stretch reads GVPNRFGVQR…MEGERRPLRV (211 aa).

The protein belongs to the pseudouridine synthase TruD family.

The catalysed reaction is uridine(13) in tRNA = pseudouridine(13) in tRNA. Responsible for synthesis of pseudouridine from uracil-13 in transfer RNAs. The chain is tRNA pseudouridine synthase D from Geobacter sp. (strain M21).